An 86-amino-acid chain; its full sequence is Cell division topological specificity factor (86 aa).

Belongs to the MinE family.

In terms of biological role, prevents the cell division inhibition by proteins MinC and MinD at internal division sites while permitting inhibition at polar sites. This ensures cell division at the proper site by restricting the formation of a division septum at the midpoint of the long axis of the cell. This chain is Cell division topological specificity factor, found in Shewanella woodyi (strain ATCC 51908 / MS32).